Reading from the N-terminus, the 205-residue chain is Protein N-terminal glutamine amidohydrolase (205 aa).

Residues Cys-20, His-74, and Asp-90 contribute to the active site.

Belongs to the NTAQ1 family. In terms of assembly, monomer.

It carries out the reaction N-terminal L-glutaminyl-[protein] + H2O = N-terminal L-glutamyl-[protein] + NH4(+). In terms of biological role, mediates the side-chain deamidation of N-terminal glutamine residues to glutamate, an important step in N-end rule pathway of protein degradation. Conversion of the resulting N-terminal glutamine to glutamate renders the protein susceptible to arginylation, polyubiquitination and degradation as specified by the N-end rule. Does not act on substrates with internal or C-terminal glutamine and does not act on non-glutamine residues in any position. This is Protein N-terminal glutamine amidohydrolase (tun) from Drosophila erecta (Fruit fly).